The following is a 282-amino-acid chain: Undecaprenyl-diphosphatase (282 aa).

Helical transmembrane passes span 1–21 (MNLF…FLPI), 40–60 (GAAF…IYFA), 89–109 (WMIA…KHEI), 112–132 (VLRS…VLVV), 153–173 (LSWT…IPGS), 196–216 (FSFL…LYQT), 228–248 (LNLA…IAFL), and 258–278 (GIFI…IGTG).

The protein belongs to the UppP family.

The protein resides in the cell inner membrane. It catalyses the reaction di-trans,octa-cis-undecaprenyl diphosphate + H2O = di-trans,octa-cis-undecaprenyl phosphate + phosphate + H(+). In terms of biological role, catalyzes the dephosphorylation of undecaprenyl diphosphate (UPP). Confers resistance to bacitracin. This chain is Undecaprenyl-diphosphatase, found in Chlorobaculum tepidum (strain ATCC 49652 / DSM 12025 / NBRC 103806 / TLS) (Chlorobium tepidum).